The primary structure comprises 107 residues: Putative double-stranded DNA mimic protein CGSHiGG_01135 (107 aa).

This sequence belongs to the putative dsDNA mimic protein family.

Its function is as follows. May act as a double-stranded DNA (dsDNA) mimic. Probably regulates the activity of a dsDNA-binding protein. The polypeptide is Putative double-stranded DNA mimic protein CGSHiGG_01135 (Haemophilus influenzae (strain PittGG)).